The primary structure comprises 290 residues: Probable endonuclease 4 (290 aa).

The Zn(2+) site is built by His-66, His-106, Glu-143, Asp-179, His-182, His-216, Asp-229, His-231, and Glu-261.

It belongs to the AP endonuclease 2 family. Zn(2+) serves as cofactor.

The catalysed reaction is Endonucleolytic cleavage to 5'-phosphooligonucleotide end-products.. In terms of biological role, endonuclease IV plays a role in DNA repair. It cleaves phosphodiester bonds at apurinic or apyrimidinic (AP) sites, generating a 3'-hydroxyl group and a 5'-terminal sugar phosphate. This chain is Probable endonuclease 4, found in Solibacter usitatus (strain Ellin6076).